The primary structure comprises 304 residues: Homoserine kinase (304 aa).

90-100 (PLARGLGSSAS) provides a ligand contact to ATP.

Belongs to the GHMP kinase family. Homoserine kinase subfamily.

Its subcellular location is the cytoplasm. The catalysed reaction is L-homoserine + ATP = O-phospho-L-homoserine + ADP + H(+). It participates in amino-acid biosynthesis; L-threonine biosynthesis; L-threonine from L-aspartate: step 4/5. In terms of biological role, catalyzes the ATP-dependent phosphorylation of L-homoserine to L-homoserine phosphate. The protein is Homoserine kinase of Staphylococcus aureus (strain JH9).